The chain runs to 426 residues: Trigger factor (426 aa).

In terms of domain architecture, PPIase FKBP-type spans 166-249 (GDIVTFDFKG…IIEVKARELP (84 aa)).

This sequence belongs to the FKBP-type PPIase family. Tig subfamily.

It localises to the cytoplasm. The enzyme catalyses [protein]-peptidylproline (omega=180) = [protein]-peptidylproline (omega=0). Its function is as follows. Involved in protein export. Acts as a chaperone by maintaining the newly synthesized protein in an open conformation. Functions as a peptidyl-prolyl cis-trans isomerase. The protein is Trigger factor of Mesoplasma florum (strain ATCC 33453 / NBRC 100688 / NCTC 11704 / L1) (Acholeplasma florum).